A 151-amino-acid polypeptide reads, in one-letter code: Phosphopantetheine adenylyltransferase (151 aa).

A substrate-binding site is contributed by S9. ATP is bound by residues 9 to 10 and H17; that span reads SF. Positions 41, 73, and 87 each coordinate substrate. Residues 88–90, E98, and 122–128 contribute to the ATP site; these read GLR and KAHISST.

This sequence belongs to the bacterial CoaD family. In terms of assembly, homohexamer. Mg(2+) serves as cofactor.

The protein localises to the cytoplasm. The enzyme catalyses (R)-4'-phosphopantetheine + ATP + H(+) = 3'-dephospho-CoA + diphosphate. It participates in cofactor biosynthesis; coenzyme A biosynthesis; CoA from (R)-pantothenate: step 4/5. Functionally, reversibly transfers an adenylyl group from ATP to 4'-phosphopantetheine, yielding dephospho-CoA (dPCoA) and pyrophosphate. This chain is Phosphopantetheine adenylyltransferase, found in Christiangramia forsetii (strain DSM 17595 / CGMCC 1.15422 / KT0803) (Gramella forsetii).